Here is a 294-residue protein sequence, read N- to C-terminus: 1,4-dihydroxy-2-naphthoate octaprenyltransferase (294 aa).

Helical transmembrane passes span 35–55 (SAVW…VIGV), 103–123 (AGLA…ATCI), 140–160 (GFGE…GTEY), 166–186 (VDWV…SVLV), 220–240 (LLVA…WCAV), and 272–292 (GLAM…AGSV).

This sequence belongs to the MenA family. Type 1 subfamily.

It is found in the cell membrane. It carries out the reaction an all-trans-polyprenyl diphosphate + 1,4-dihydroxy-2-naphthoate + H(+) = a 2-demethylmenaquinol + CO2 + diphosphate. Its pathway is quinol/quinone metabolism; menaquinone biosynthesis; menaquinol from 1,4-dihydroxy-2-naphthoate: step 1/2. Conversion of 1,4-dihydroxy-2-naphthoate (DHNA) to demethylmenaquinone (DMK). In Mycobacterium leprae (strain TN), this protein is 1,4-dihydroxy-2-naphthoate octaprenyltransferase.